The following is a 139-amino-acid chain: MPNIFKILLIVLLAVVSFRLSASTGDKKTANDGSGNNSSAGIGTKIKRIVTAGLLFTSLATGGAEAIGRSNAQGGNAAGLVPSHLTNRSMAPPPPPAQFEKGAATRVEKMRAQLRELAEKMTDKDPKRLSPSGPDPHHH.

Positions 1 to 22 are cleaved as a signal peptide; sequence MPNIFKILLIVLLAVVSFRLSA. Positions 23-90 are required for secretion from the host cytoplasm to the host apoplasm; the sequence is STGDKKTAND…VPSHLTNRSM (68 aa). 2 N-linked (GlcNAc...) asparagine glycosylation sites follow: Asn-37 and Asn-87. Residues 66–139 are disordered; it reads AIGRSNAQGG…SPSGPDPHHH (74 aa). Positions 100–125 form a coiled coil; that stretch reads EKGAATRVEKMRAQLRELAEKMTDKD. Residues 106 to 128 show a composition bias toward basic and acidic residues; that stretch reads RVEKMRAQLRELAEKMTDKDPKR. The short motif at 128–139 is the CLE element; sequence RLSPSGPDPHHH.

It belongs to the CLV3/ESR signal peptide family. Highly expressed exclusively within the dorsal esophageal gland cell during syncytium formation in host plants (at protein level).

Its subcellular location is the secreted. The protein localises to the host cytoplasm. The protein resides in the host extracellular space. It localises to the extracellular space. It is found in the apoplast. In terms of biological role, mimics host plant CLE extracellular signal peptides that regulate cell fate. May play a role in the differentiation or division of feeding cells (syncytia) induced in plant roots during infection. The chain is CLAVATA3/ESR (CLE)-related protein 1 (CLE1) from Heterodera glycines (Soybean cyst nematode worm).